The following is an 874-amino-acid chain: Probable inorganic carbon transporter subunit DabA (874 aa).

Cysteine 398, aspartate 400, histidine 580, and cysteine 595 together coordinate Zn(2+).

This sequence belongs to the inorganic carbon transporter (TC 9.A.2) DabA family. In terms of assembly, forms a complex with DabB. Zn(2+) serves as cofactor.

It is found in the cell membrane. In terms of biological role, part of an energy-coupled inorganic carbon pump. The polypeptide is Probable inorganic carbon transporter subunit DabA (Bacillus cereus (strain Q1)).